The primary structure comprises 373 residues: Putative glutamate--cysteine ligase 2 (373 aa).

It belongs to the glutamate--cysteine ligase type 2 family. YbdK subfamily. In terms of assembly, homodimer.

The enzyme catalyses L-cysteine + L-glutamate + ATP = gamma-L-glutamyl-L-cysteine + ADP + phosphate + H(+). In terms of biological role, ATP-dependent carboxylate-amine ligase which exhibits weak glutamate--cysteine ligase activity. The chain is Putative glutamate--cysteine ligase 2 from Enterobacter sp. (strain 638).